We begin with the raw amino-acid sequence, 342 residues long: Putative ABC transporter anion-binding protein HVO_1888 (342 aa).

A signal peptide (tat-type signal) is located at residues 1–32 (MAIERRRFLQAAGVGAVLGLSGCTGNTSPPQA). The segment covering 24 to 37 (TGNTSPPQANNETA) has biased composition (polar residues). The segment at 24–52 (TGNTSPPQANNETAEGSGGSESGDGSTQE) is disordered.

In terms of assembly, the complex is composed of two ATP-binding proteins (HVO_1886), two transmembrane proteins (HVO_1887) and a solute-binding protein (HVO_1888). Predicted to be exported by the Tat system. The position of the signal peptide cleavage has not been experimentally proven.

In terms of biological role, part of an ABC transporter complex involved in anions import. The chain is Putative ABC transporter anion-binding protein HVO_1888 from Haloferax volcanii (strain ATCC 29605 / DSM 3757 / JCM 8879 / NBRC 14742 / NCIMB 2012 / VKM B-1768 / DS2) (Halobacterium volcanii).